Reading from the N-terminus, the 627-residue chain is tRNA uridine 5-carboxymethylaminomethyl modification enzyme MnmG (627 aa).

FAD is bound by residues 13–18 (GGGHAG), V125, and S180. Position 274–288 (274–288 (GPRYCPSIEDKVVRF)) interacts with NAD(+). Q371 contributes to the FAD binding site.

The protein belongs to the MnmG family. In terms of assembly, homodimer. Heterotetramer of two MnmE and two MnmG subunits. FAD serves as cofactor.

It is found in the cytoplasm. NAD-binding protein involved in the addition of a carboxymethylaminomethyl (cmnm) group at the wobble position (U34) of certain tRNAs, forming tRNA-cmnm(5)s(2)U34. The chain is tRNA uridine 5-carboxymethylaminomethyl modification enzyme MnmG from Francisella tularensis subsp. novicida (strain U112).